Reading from the N-terminus, the 218-residue chain is N-(5'-phosphoribosyl)anthranilate isomerase (218 aa).

This sequence belongs to the TrpF family.

The enzyme catalyses N-(5-phospho-beta-D-ribosyl)anthranilate = 1-(2-carboxyphenylamino)-1-deoxy-D-ribulose 5-phosphate. Its pathway is amino-acid biosynthesis; L-tryptophan biosynthesis; L-tryptophan from chorismate: step 3/5. This chain is N-(5'-phosphoribosyl)anthranilate isomerase, found in Rhodopseudomonas palustris (strain BisB18).